A 308-amino-acid polypeptide reads, in one-letter code: Tetraacyldisaccharide 4'-kinase (308 aa).

63-70 (SFGGNGKT) contacts ATP.

This sequence belongs to the LpxK family.

The catalysed reaction is a lipid A disaccharide + ATP = a lipid IVA + ADP + H(+). It functions in the pathway glycolipid biosynthesis; lipid IV(A) biosynthesis; lipid IV(A) from (3R)-3-hydroxytetradecanoyl-[acyl-carrier-protein] and UDP-N-acetyl-alpha-D-glucosamine: step 6/6. Its function is as follows. Transfers the gamma-phosphate of ATP to the 4'-position of a tetraacyldisaccharide 1-phosphate intermediate (termed DS-1-P) to form tetraacyldisaccharide 1,4'-bis-phosphate (lipid IVA). The chain is Tetraacyldisaccharide 4'-kinase from Campylobacter jejuni subsp. jejuni serotype O:6 (strain 81116 / NCTC 11828).